Here is a 469-residue protein sequence, read N- to C-terminus: UDP-N-acetylmuramate--L-alanine ligase (469 aa).

113–119 (GSHGKTT) contributes to the ATP binding site.

The protein belongs to the MurCDEF family.

Its subcellular location is the cytoplasm. It catalyses the reaction UDP-N-acetyl-alpha-D-muramate + L-alanine + ATP = UDP-N-acetyl-alpha-D-muramoyl-L-alanine + ADP + phosphate + H(+). It participates in cell wall biogenesis; peptidoglycan biosynthesis. Functionally, cell wall formation. The chain is UDP-N-acetylmuramate--L-alanine ligase from Sorangium cellulosum (strain So ce56) (Polyangium cellulosum (strain So ce56)).